The chain runs to 79 residues: Cytochrome b (79 aa).

Transmembrane regions (helical) follow at residues 1-7 (SALFLAM), 31-52 (WLIRYMHANGSSLFFICLYLHI), and 67-79 (WNIGIILLFLTMA). Residues His-37 and His-51 each coordinate heme b.

It belongs to the cytochrome b family. As to quaternary structure, the cytochrome bc1 complex contains 11 subunits: 3 respiratory subunits (MT-CYB, CYC1 and UQCRFS1), 2 core proteins (UQCRC1 and UQCRC2) and 6 low-molecular weight proteins (UQCRH/QCR6, UQCRB/QCR7, UQCRQ/QCR8, UQCR10/QCR9, UQCR11/QCR10 and a cleavage product of UQCRFS1). This cytochrome bc1 complex then forms a dimer. Heme b is required as a cofactor.

It is found in the mitochondrion inner membrane. Functionally, component of the ubiquinol-cytochrome c reductase complex (complex III or cytochrome b-c1 complex) that is part of the mitochondrial respiratory chain. The b-c1 complex mediates electron transfer from ubiquinol to cytochrome c. Contributes to the generation of a proton gradient across the mitochondrial membrane that is then used for ATP synthesis. This Dipodomys californicus (California kangaroo rat) protein is Cytochrome b (MT-CYB).